The primary structure comprises 476 residues: ATP synthase subunit beta, mitochondrial (476 aa).

Gly-156–Val-163 is a binding site for ATP.

F-type ATP synthases have 2 components, the catalytic core F(1) and the membrane-embedded component F(0), linked together by a central stalk and a peripheral stalk. The central stalk, also called rotor shaft, is often seen as part of F(1). The peripheral stalk is seen as part of F(0). F(0) contains the membrane channel next to the rotor. F-type ATP synthases form dimers but each monomer functions independently in ATP generation. The dimer consists of 18 different polypeptides: ATP1 (subunit alpha, part of F(1), 3 molecules per monomer), ATP2 (subunit beta, part of F(1), 3 molecules per monomer), ATP3 (subunit gamma, part of the central stalk), ATP4 (subunit b, part of the peripheral stalk), ATP5/OSCP (subunit 5/OSCP, part of the peripheral stalk), ATP6 (subunit a, part of the peripheral stalk), ATP7 (subunit d, part of the peripheral stalk), ATP8 (subunit 8, part of the peripheral stalk), OLI1 (subunit c, part of the rotor, 10 molecules per monomer), ATP14 (subunit h, part of the peripheral stalk), ATP15 (subunit epsilon, part of the central stalk), ATP16 (subunit delta, part of the central stalk), ATP17 (subunit f, part of the peripheral stalk), ATP18 (subunit i/j, part of the peripheral stalk). Dimer-specific subunits are ATP19 (subunit k, at interface between monomers), ATP20 (subunit g, at interface between monomers), TIM11 (subunit e, at interface between monomers). Also contains subunit L.

It localises to the mitochondrion inner membrane. It carries out the reaction ATP + H2O + 4 H(+)(in) = ADP + phosphate + 5 H(+)(out). Functionally, mitochondrial membrane ATP synthase (F(1)F(0) ATP synthase or Complex V) produces ATP from ADP in the presence of a proton gradient across the membrane which is generated by electron transport complexes of the respiratory chain. F-type ATP synthases consist of two structural domains, F(1) - containing the extramembraneous catalytic core, and F(0) - containing the membrane proton channel, linked together by a central stalk and a peripheral stalk. During catalysis, ATP synthesis in the catalytic domain of F(1) is coupled via a rotary mechanism of the central stalk subunits to proton translocation. Subunits alpha/ATP1 and beta/ATP2 form the catalytic core in F(1). Rotation of the central stalk against the surrounding alpha/ATP1(3)beta/ATP2(3) subunits leads to hydrolysis of ATP in three separate catalytic sites on the beta/ATP2 subunits. In Pichia angusta (Yeast), this protein is ATP synthase subunit beta, mitochondrial.